The following is a 127-amino-acid chain: Aspartate 1-decarboxylase (127 aa).

The active-site Schiff-base intermediate with substrate; via pyruvic acid is the S25. S25 bears the Pyruvic acid (Ser) mark. Residue T57 participates in substrate binding. Y58 acts as the Proton donor in catalysis. A substrate-binding site is contributed by 73–75; that stretch reads GAA.

It belongs to the PanD family. As to quaternary structure, heterooctamer of four alpha and four beta subunits. Pyruvate serves as cofactor. Post-translationally, is synthesized initially as an inactive proenzyme, which is activated by self-cleavage at a specific serine bond to produce a beta-subunit with a hydroxyl group at its C-terminus and an alpha-subunit with a pyruvoyl group at its N-terminus.

The protein resides in the cytoplasm. The enzyme catalyses L-aspartate + H(+) = beta-alanine + CO2. It functions in the pathway cofactor biosynthesis; (R)-pantothenate biosynthesis; beta-alanine from L-aspartate: step 1/1. Functionally, catalyzes the pyruvoyl-dependent decarboxylation of aspartate to produce beta-alanine. The sequence is that of Aspartate 1-decarboxylase from Neisseria gonorrhoeae (strain ATCC 700825 / FA 1090).